We begin with the raw amino-acid sequence, 129 residues long: Ribosome-binding factor A (129 aa).

Belongs to the RbfA family. In terms of assembly, monomer. Binds 30S ribosomal subunits, but not 50S ribosomal subunits or 70S ribosomes.

The protein localises to the cytoplasm. Functionally, one of several proteins that assist in the late maturation steps of the functional core of the 30S ribosomal subunit. Associates with free 30S ribosomal subunits (but not with 30S subunits that are part of 70S ribosomes or polysomes). Required for efficient processing of 16S rRNA. May interact with the 5'-terminal helix region of 16S rRNA. This Azotobacter vinelandii (strain DJ / ATCC BAA-1303) protein is Ribosome-binding factor A.